The following is a 481-amino-acid chain: MGDVIVLYAAPGMGHIVSMVELGKLIVHRYGPHKFSITILYTCGSVVDTTSIPAYIRRISHSHPSISFCQFPRVTNKITPNISGAAIMFDFIRQNDPHVRRALQEISKSAAVRAFVIDLFCTSALPIGKEFNIPTYYFHTSGAAVLAAFLYFPKIDEQTTDSFKDLRDTVFEFPGWKSPLKAIHMVEPVLDRNDPAYSDMIYFCSHLPKSNGIVVNTFEELEPPTILQAIAGGLCVPDGPTPPVYYVGPLIDEEKELSNDAAAAEEEDCLSWLDKQPRRSVLFLCFGSRGSFPAVQLKEIANGLEASGQRFLWVVKKPPVEEKTKQVHGVDDFDLEAVLPEGFLERTADRGMVVKSWAPQVVVLKKESVGGFVTHCGWNSVLEAVVAGVPMIAWPLYAEQQMNRNVLVTDMEMAIGVEQRDEEDGFVNAEEVERRVRELMESEGGRLLRERCKKMGEMALAALGETGSSTRNLVNFVSSIT.

UDP-alpha-D-glucose is bound by residues S288, 357–358 (WA), 375–383 (HCGWNSVLE), and 397–400 (YAEQ).

Belongs to the UDP-glycosyltransferase family.

Functionally, glycosyltransferase that may possess chalcone and dihydrochalcone 2'-O-glucosyltransferase activity. This Pyrus communis (Pear) protein is UDP-glycosyltransferase 88F3.